Consider the following 570-residue polypeptide: Nucleoprotein (570 aa).

The binding site for the cap structure m7GTP stretch occupies residues 54–241 (MRKDKRNDSD…IDVSKSSINV (188 aa)). Positions 342-361 (IDLSQNKQMSPAKPKGAGHG) are disordered. Mn(2+) contacts are provided by Asp390 and Glu392. The Zn(2+) site is built by Glu400, Cys507, His510, and Cys530. Asp534 is a Mn(2+) binding site.

This sequence belongs to the arenaviridae nucleocapsid protein family. Homomultimerizes to form the nucleocapsid. Binds to viral genomic RNA. Interacts with glycoprotein G2. Interacts with protein Z; this interaction probably directs the encapsidated genome to budding sites. Interacts with protein L; this interaction does not interfere with Z-L interaction. Interacts with host IKBKE (via Protein kinase domain); the interaction inhibits IKBKE kinase activity.

The protein localises to the virion. Its subcellular location is the host cytoplasm. Encapsidates the genome, protecting it from nucleases. The encapsidated genomic RNA is termed the nucleocapsid (NC). Serves as template for viral transcription and replication. The increased presence of protein N in host cell does not seem to trigger the switch from transcription to replication as observed in other negative strain RNA viruses. Through the interaction with host IKBKE, strongly inhibits the phosphorylation and nuclear translocation of host IRF3, a protein involved in interferon activation pathway, leading to the inhibition of interferon-beta and IRF3-dependent promoters activation. Also encodes a functional 3'-5' exoribonuclease that degrades preferentially dsRNA substrates and thereby participates in the suppression of interferon induction. The chain is Nucleoprotein from Praomys (African soft-furred rats).